The primary structure comprises 81 residues: Photosystem I iron-sulfur center (81 aa).

4Fe-4S ferredoxin-type domains are found at residues 2-31 (SHAV…MVPW) and 39-68 (IAAS…IRVY). The [4Fe-4S] cluster site is built by cysteine 11, cysteine 14, cysteine 17, cysteine 21, cysteine 48, cysteine 51, cysteine 54, and cysteine 58.

In terms of assembly, the cyanobacterial PSI reaction center is composed of one copy each of PsaA,B,C,D,E,F,I,J,K,L,M and X, and forms trimeric complexes. It depends on [4Fe-4S] cluster as a cofactor.

The protein resides in the cellular thylakoid membrane. It carries out the reaction reduced [plastocyanin] + hnu + oxidized [2Fe-2S]-[ferredoxin] = oxidized [plastocyanin] + reduced [2Fe-2S]-[ferredoxin]. Functionally, apoprotein for the two 4Fe-4S centers FA and FB of photosystem I (PSI); essential for photochemical activity. FB is the terminal electron acceptor of PSI, donating electrons to ferredoxin. The C-terminus interacts with PsaA/B/D and helps assemble the protein into the PSI complex. Required for binding of PsaD and PsaE to PSI. PSI is a plastocyanin/cytochrome c6-ferredoxin oxidoreductase, converting photonic excitation into a charge separation, which transfers an electron from the donor P700 chlorophyll pair to the spectroscopically characterized acceptors A0, A1, FX, FA and FB in turn. This chain is Photosystem I iron-sulfur center, found in Prochlorococcus marinus (strain MIT 9303).